A 513-amino-acid polypeptide reads, in one-letter code: ATP synthase subunit alpha 2 (513 aa).

Residue 169-176 (GDRQTGKT) participates in ATP binding.

It belongs to the ATPase alpha/beta chains family. As to quaternary structure, F-type ATPases have 2 components, CF(1) - the catalytic core - and CF(0) - the membrane proton channel. CF(1) has five subunits: alpha(3), beta(3), gamma(1), delta(1), epsilon(1). CF(0) has three main subunits: a(1), b(2) and c(9-12). The alpha and beta chains form an alternating ring which encloses part of the gamma chain. CF(1) is attached to CF(0) by a central stalk formed by the gamma and epsilon chains, while a peripheral stalk is formed by the delta and b chains.

It localises to the cell inner membrane. It catalyses the reaction ATP + H2O + 4 H(+)(in) = ADP + phosphate + 5 H(+)(out). In terms of biological role, produces ATP from ADP in the presence of a proton gradient across the membrane. The alpha chain is a regulatory subunit. The protein is ATP synthase subunit alpha 2 of Shewanella frigidimarina (strain NCIMB 400).